Consider the following 137-residue polypeptide: Proofreading thioesterase EntH (137 aa).

The active-site Nucleophile or proton acceptor is the Glu63.

It belongs to the thioesterase PaaI family. As to quaternary structure, homotetramer. Dimer of dimers. Interacts specifically with the aryl carrier protein (ArCP) domain of EntB.

It localises to the cytoplasm. It participates in siderophore biosynthesis; enterobactin biosynthesis. Its function is as follows. Required for optimal enterobactin synthesis. Acts as a proofreading enzyme that prevents EntB misacylation by hydrolyzing the thioester bound existing between EntB and wrongly charged molecules. This is Proofreading thioesterase EntH (entH) from Klebsiella pneumoniae subsp. pneumoniae (strain ATCC 700721 / MGH 78578).